Here is a 21-residue protein sequence, read N- to C-terminus: Major outer membrane protein (21 aa).

Disulfide bond interactions within and between MOMP molecules and other components form high molecular-weight oligomers.

The protein resides in the cell outer membrane. Its function is as follows. Structural rigidity of the outer membrane of elementary bodies and porin forming, permitting diffusion of solutes through the intracellular reticulate body membrane. This is Major outer membrane protein from Actinobacillus suis.